The chain runs to 99 residues: Acylphosphatase (99 aa).

The Acylphosphatase-like domain occupies 11 to 97; it reads ARRIHVKGKV…VVAQGFTQKP (87 aa). Residues arginine 26 and asparagine 44 contribute to the active site.

This sequence belongs to the acylphosphatase family.

It carries out the reaction an acyl phosphate + H2O = a carboxylate + phosphate + H(+). This Rhizorhabdus wittichii (strain DSM 6014 / CCUG 31198 / JCM 15750 / NBRC 105917 / EY 4224 / RW1) (Sphingomonas wittichii) protein is Acylphosphatase (acyP).